Here is a 313-residue protein sequence, read N- to C-terminus: Pyrimidine-specific ribonucleoside hydrolase RihB (313 aa).

Catalysis depends on E11, which acts as the Proton acceptor. E11, D16, and V124 together coordinate Ca(2+). Residues Q227 and H239 each contribute to the substrate site. D240 lines the Ca(2+) pocket.

This sequence belongs to the IUNH family. RihB subfamily. In terms of assembly, homotetramer. The cofactor is Ca(2+).

It carries out the reaction a pyrimidine ribonucleoside + H2O = a pyrimidine nucleobase + D-ribose. Functionally, hydrolyzes cytidine or uridine to ribose and cytosine or uracil, respectively. Has a clear preference for cytidine over uridine. Strictly specific for ribonucleosides. In Shigella flexneri serotype 5b (strain 8401), this protein is Pyrimidine-specific ribonucleoside hydrolase RihB.